Here is a 240-residue protein sequence, read N- to C-terminus: 1-(5-phosphoribosyl)-5-[(5-phosphoribosylamino)methylideneamino] imidazole-4-carboxamide isomerase 2 (240 aa).

The active-site Proton acceptor is Asp-8. The Proton donor role is filled by Asp-129.

Belongs to the HisA/HisF family.

Its subcellular location is the cytoplasm. It catalyses the reaction 1-(5-phospho-beta-D-ribosyl)-5-[(5-phospho-beta-D-ribosylamino)methylideneamino]imidazole-4-carboxamide = 5-[(5-phospho-1-deoxy-D-ribulos-1-ylimino)methylamino]-1-(5-phospho-beta-D-ribosyl)imidazole-4-carboxamide. Its pathway is amino-acid biosynthesis; L-histidine biosynthesis; L-histidine from 5-phospho-alpha-D-ribose 1-diphosphate: step 4/9. This Ruegeria sp. (strain TM1040) (Silicibacter sp.) protein is 1-(5-phosphoribosyl)-5-[(5-phosphoribosylamino)methylideneamino] imidazole-4-carboxamide isomerase 2.